A 63-amino-acid chain; its full sequence is Anionic peptide NDBP7 (63 aa).

Residues 1-20 (MISRFCLLFLLVFVVSKIQA) form the signal peptide.

Belongs to the non-disulfide-bridged peptide (NDBP) superfamily. Long chain multifunctional peptide (group 2) family. In terms of tissue distribution, expressed by the venom gland.

Its subcellular location is the secreted. In Lychas mucronatus (Chinese swimming scorpion), this protein is Anionic peptide NDBP7.